Reading from the N-terminus, the 214-residue chain is Thymidylate kinase (214 aa).

10–17 (GPDGAGKT) contacts ATP.

This sequence belongs to the thymidylate kinase family.

It carries out the reaction dTMP + ATP = dTDP + ADP. In terms of biological role, phosphorylation of dTMP to form dTDP in both de novo and salvage pathways of dTTP synthesis. The polypeptide is Thymidylate kinase (Lacticaseibacillus casei (strain BL23) (Lactobacillus casei)).